We begin with the raw amino-acid sequence, 209 residues long: Uracil phosphoribosyltransferase (209 aa).

5-phospho-alpha-D-ribose 1-diphosphate contacts are provided by residues Arg79, Arg104, and 131-139 (DPMLATGVS). Residues Ile194 and 199-201 (GDA) contribute to the uracil site. Residue Asp200 coordinates 5-phospho-alpha-D-ribose 1-diphosphate.

It belongs to the UPRTase family. Mg(2+) serves as cofactor.

It catalyses the reaction UMP + diphosphate = 5-phospho-alpha-D-ribose 1-diphosphate + uracil. Its pathway is pyrimidine metabolism; UMP biosynthesis via salvage pathway; UMP from uracil: step 1/1. Its activity is regulated as follows. Allosterically activated by GTP. In terms of biological role, catalyzes the conversion of uracil and 5-phospho-alpha-D-ribose 1-diphosphate (PRPP) to UMP and diphosphate. In Thermotoga petrophila (strain ATCC BAA-488 / DSM 13995 / JCM 10881 / RKU-1), this protein is Uracil phosphoribosyltransferase.